A 338-amino-acid chain; its full sequence is Biotin synthase (338 aa).

The Radical SAM core domain occupies 46-270 (NEVQLSTLLS…VAVARITMPA (225 aa)). Residues C61, C65, and C68 each coordinate [4Fe-4S] cluster. Positions 105, 136, 196, and 274 each coordinate [2Fe-2S] cluster.

It belongs to the radical SAM superfamily. Biotin synthase family. In terms of assembly, homodimer. [4Fe-4S] cluster is required as a cofactor. [2Fe-2S] cluster serves as cofactor.

The catalysed reaction is (4R,5S)-dethiobiotin + (sulfur carrier)-SH + 2 reduced [2Fe-2S]-[ferredoxin] + 2 S-adenosyl-L-methionine = (sulfur carrier)-H + biotin + 2 5'-deoxyadenosine + 2 L-methionine + 2 oxidized [2Fe-2S]-[ferredoxin]. The protein operates within cofactor biosynthesis; biotin biosynthesis; biotin from 7,8-diaminononanoate: step 2/2. Its function is as follows. Catalyzes the conversion of dethiobiotin (DTB) to biotin by the insertion of a sulfur atom into dethiobiotin via a radical-based mechanism. The protein is Biotin synthase of Rhizorhabdus wittichii (strain DSM 6014 / CCUG 31198 / JCM 15750 / NBRC 105917 / EY 4224 / RW1) (Sphingomonas wittichii).